A 93-amino-acid chain; its full sequence is Uteroglobin (93 aa).

The N-terminal stretch at 1–17 (MKLAITIILVMLSVCYS) is a signal peptide.

The protein belongs to the secretoglobin family. In terms of assembly, antiparallel homodimer; disulfide-linked. Interaction with LMBR1L is controversial.

The protein localises to the secreted. In terms of biological role, binds phosphatidylcholine, phosphatidylinositol, polychlorinated biphenyls (PCB) and weakly progesterone, potent inhibitor of phospholipase A2. This is Uteroglobin (SCGB1A1) from Neotomodon alstoni (Mexican volcano mouse).